The primary structure comprises 418 residues: Putative ion-transport protein YfeO (418 aa).

12 consecutive transmembrane segments (helical) span residues 10–30 (LLLSLPAVAIGIASSLILIVV), 54–74 (DSPLWIIGVLTLTGIAVGLVI), 99–119 (ALPGLIVALILGLAGGVSLGP), 120–140 (EHPIMTVNIALAVAIGARLLP), 149–169 (ILASAGTIGALFGTPVAAALI), 186–206 (LFAPLMAAAAGALTTGLFFHP), 223–243 (ILSGAIVAAIAIAAGMVAVWC), 258–278 (VLVLGIGGFILGILGVIGGPV), 300–320 (DYFLLAVIKLAALVVAAASGF), 322–342 (GGRIFPAVFVGVALGLMLHEH), 343–363 (VPAVPAAITVSCAILGIVLVV), and 371–391 (LFMAAVVVPNTTLLPLLCIVM).

It belongs to the chloride channel (TC 2.A.49) family.

It localises to the cell membrane. In Shigella boydii serotype 18 (strain CDC 3083-94 / BS512), this protein is Putative ion-transport protein YfeO.